The sequence spans 251 residues: Uridylate kinase (251 aa).

19 to 22 (KLSG) serves as a coordination point for ATP. Residue Gly61 coordinates UMP. 2 residues coordinate ATP: Gly62 and Arg66. Residues Asp81 and 142 to 149 (TGNPYFTT) each bind UMP. 3 residues coordinate ATP: Thr169, Tyr175, and Asp178.

Belongs to the UMP kinase family. In terms of assembly, homohexamer.

It localises to the cytoplasm. It catalyses the reaction UMP + ATP = UDP + ADP. The protein operates within pyrimidine metabolism; CTP biosynthesis via de novo pathway; UDP from UMP (UMPK route): step 1/1. With respect to regulation, inhibited by UTP. In terms of biological role, catalyzes the reversible phosphorylation of UMP to UDP. This Anaeromyxobacter dehalogenans (strain 2CP-C) protein is Uridylate kinase.